The sequence spans 297 residues: 4-hydroxy-tetrahydrodipicolinate synthase (297 aa).

T45 lines the pyruvate pocket. Y133 acts as the Proton donor/acceptor in catalysis. K161 (schiff-base intermediate with substrate) is an active-site residue. Pyruvate is bound at residue I203.

This sequence belongs to the DapA family. In terms of assembly, homotetramer; dimer of dimers.

The protein resides in the cytoplasm. It catalyses the reaction L-aspartate 4-semialdehyde + pyruvate = (2S,4S)-4-hydroxy-2,3,4,5-tetrahydrodipicolinate + H2O + H(+). It participates in amino-acid biosynthesis; L-lysine biosynthesis via DAP pathway; (S)-tetrahydrodipicolinate from L-aspartate: step 3/4. Catalyzes the condensation of (S)-aspartate-beta-semialdehyde [(S)-ASA] and pyruvate to 4-hydroxy-tetrahydrodipicolinate (HTPA). This chain is 4-hydroxy-tetrahydrodipicolinate synthase, found in Buchnera aphidicola subsp. Cinara cedri (strain Cc).